Consider the following 380-residue polypeptide: Probable protein phosphatase 2C 63 (380 aa).

The 304-residue stretch at 35 to 338 (DYSIAVVQAN…DDISVIVVYL (304 aa)) folds into the PPM-type phosphatase domain. Mn(2+) is bound by residues D66, G67, D270, and D329.

Belongs to the PP2C family. Mg(2+) is required as a cofactor. Requires Mn(2+) as cofactor.

It catalyses the reaction O-phospho-L-seryl-[protein] + H2O = L-seryl-[protein] + phosphate. It carries out the reaction O-phospho-L-threonyl-[protein] + H2O = L-threonyl-[protein] + phosphate. Functionally, may dephosphorylate and repress plasma membrane H(+)-ATPases (PM H(+)-ATPases, e.g. AHA1 and AHA2), thus influencing negatively plant growth and fitness. The protein is Probable protein phosphatase 2C 63 of Arabidopsis thaliana (Mouse-ear cress).